Here is a 60-residue protein sequence, read N- to C-terminus: MDKKMIFKELTELHDEYCKDCFIKKQFRKEFGKTYAHSFCINKCTVGEKLKQYGDVLTNH.

This is an uncharacterized protein from Bacillus subtilis (strain 168).